Consider the following 209-residue polypeptide: LexA repressor (209 aa).

Residues 30–50 (RVEIAREIGFKSPNAAEEHLK) constitute a DNA-binding region (H-T-H motif). Active-site for autocatalytic cleavage activity residues include serine 126 and lysine 163.

It belongs to the peptidase S24 family. As to quaternary structure, homodimer.

The enzyme catalyses Hydrolysis of Ala-|-Gly bond in repressor LexA.. Functionally, represses a number of genes involved in the response to DNA damage (SOS response), including recA and lexA. In the presence of single-stranded DNA, RecA interacts with LexA causing an autocatalytic cleavage which disrupts the DNA-binding part of LexA, leading to derepression of the SOS regulon and eventually DNA repair. This Glaesserella parasuis serovar 5 (strain SH0165) (Haemophilus parasuis) protein is LexA repressor.